The primary structure comprises 182 residues: Peptidyl-tRNA hydrolase (182 aa).

Tyr-14 serves as a coordination point for tRNA. The active-site Proton acceptor is His-19. Residues Phe-64, Asn-66, and Asn-112 each contribute to the tRNA site.

Belongs to the PTH family. Monomer.

It localises to the cytoplasm. It carries out the reaction an N-acyl-L-alpha-aminoacyl-tRNA + H2O = an N-acyl-L-amino acid + a tRNA + H(+). In terms of biological role, hydrolyzes ribosome-free peptidyl-tRNAs (with 1 or more amino acids incorporated), which drop off the ribosome during protein synthesis, or as a result of ribosome stalling. Catalyzes the release of premature peptidyl moieties from peptidyl-tRNA molecules trapped in stalled 50S ribosomal subunits, and thus maintains levels of free tRNAs and 50S ribosomes. The polypeptide is Peptidyl-tRNA hydrolase (Wolbachia pipientis wMel).